A 184-amino-acid polypeptide reads, in one-letter code: Muscle-specific protein 20 (184 aa).

In terms of domain architecture, Calponin-homology (CH) spans Pro17–Thr122. A Calponin-like repeat occupies Val157 to Leu181.

The protein belongs to the calponin family. As to expression, found in synchronous muscle; not found in asynchronous indirect flight muscle.

The sequence is that of Muscle-specific protein 20 (Mp20) from Drosophila melanogaster (Fruit fly).